The sequence spans 874 residues: Probable inorganic carbon transporter subunit DabA (874 aa).

Zn(2+) is bound by residues cysteine 398, aspartate 400, histidine 580, and cysteine 595.

Belongs to the inorganic carbon transporter (TC 9.A.2) DabA family. In terms of assembly, forms a complex with DabB. Zn(2+) serves as cofactor.

It localises to the cell membrane. In terms of biological role, part of an energy-coupled inorganic carbon pump. This chain is Probable inorganic carbon transporter subunit DabA, found in Bacillus cereus (strain 03BB102).